The following is a 202-amino-acid chain: Glycerol-3-phosphate acyltransferase (202 aa).

Transmembrane regions (helical) follow at residues 3 to 23, 87 to 107, 118 to 138, 144 to 164, and 167 to 187; these read NLII…LILA, LLWS…YLLF, GAMI…WVVI, ISSL…FIFN, and LEIH…YKHL.

The protein belongs to the PlsY family. Probably interacts with PlsX.

The protein localises to the cell inner membrane. The enzyme catalyses an acyl phosphate + sn-glycerol 3-phosphate = a 1-acyl-sn-glycero-3-phosphate + phosphate. It functions in the pathway lipid metabolism; phospholipid metabolism. In terms of biological role, catalyzes the transfer of an acyl group from acyl-phosphate (acyl-PO(4)) to glycerol-3-phosphate (G3P) to form lysophosphatidic acid (LPA). This enzyme utilizes acyl-phosphate as fatty acyl donor, but not acyl-CoA or acyl-ACP. The sequence is that of Glycerol-3-phosphate acyltransferase from Campylobacter jejuni (strain RM1221).